The chain runs to 517 residues: Probable bifunctional methylthioribulose-1-phosphate dehydratase/enolase-phosphatase E1 1 (517 aa).

The methylthioribulose-1-phosphate dehydratase stretch occupies residues 1 to 240 (MAAAALNGLK…AIKLYQLGLD (240 aa)). Cys-112 contacts substrate. Zn(2+) is bound by residues His-130 and His-132. Glu-155 serves as the catalytic Proton donor/acceptor; for methylthioribulose-1-phosphate dehydratase activity. His-205 contributes to the Zn(2+) binding site. Residues 278 to 517 (IVLDIEGTTT…FKTITSFSDI (240 aa)) form an enolase-phosphatase E1 region. Mg(2+) contacts are provided by Asp-281 and Glu-283. Substrate-binding positions include 416–417 (SS) and Lys-450. Position 476 (Asp-476) interacts with Mg(2+).

The protein in the N-terminal section; belongs to the aldolase class II family. MtnB subfamily. In the C-terminal section; belongs to the HAD-like hydrolase superfamily. MasA/MtnC family. Zn(2+) is required as a cofactor. The cofactor is Mg(2+).

The enzyme catalyses 5-(methylsulfanyl)-D-ribulose 1-phosphate = 5-methylsulfanyl-2,3-dioxopentyl phosphate + H2O. It carries out the reaction 5-methylsulfanyl-2,3-dioxopentyl phosphate + H2O = 1,2-dihydroxy-5-(methylsulfanyl)pent-1-en-3-one + phosphate. It participates in amino-acid biosynthesis; L-methionine biosynthesis via salvage pathway; L-methionine from S-methyl-5-thio-alpha-D-ribose 1-phosphate: step 2/6. It functions in the pathway amino-acid biosynthesis; L-methionine biosynthesis via salvage pathway; L-methionine from S-methyl-5-thio-alpha-D-ribose 1-phosphate: step 3/6. Its pathway is amino-acid biosynthesis; L-methionine biosynthesis via salvage pathway; L-methionine from S-methyl-5-thio-alpha-D-ribose 1-phosphate: step 4/6. This Vitis vinifera (Grape) protein is Probable bifunctional methylthioribulose-1-phosphate dehydratase/enolase-phosphatase E1 1.